The chain runs to 369 residues: Molybdenum import ATP-binding protein ModC (369 aa).

In terms of domain architecture, ABC transporter spans 7–243 (PGQAGIHARF…LDLPMAMTDD (237 aa)). 41–48 (GQSGSGKT) serves as a coordination point for ATP. A Mop domain is found at 304–369 (EGSILNVLAV…AQIKAVSLLA (66 aa)).

This sequence belongs to the ABC transporter superfamily. Molybdate importer (TC 3.A.1.8) family. As to quaternary structure, the complex is composed of two ATP-binding proteins (ModC), two transmembrane proteins (ModB) and a solute-binding protein (ModA).

The protein localises to the cell inner membrane. It carries out the reaction molybdate(out) + ATP + H2O = molybdate(in) + ADP + phosphate + H(+). In terms of biological role, part of the ABC transporter complex ModABC involved in molybdenum import. Responsible for energy coupling to the transport system. This is Molybdenum import ATP-binding protein ModC from Bordetella bronchiseptica (strain ATCC BAA-588 / NCTC 13252 / RB50) (Alcaligenes bronchisepticus).